Consider the following 106-residue polypeptide: Urease subunit beta (106 aa).

This sequence belongs to the urease beta subunit family. Heterotrimer of UreA (gamma), UreB (beta) and UreC (alpha) subunits. Three heterotrimers associate to form the active enzyme.

It localises to the cytoplasm. It carries out the reaction urea + 2 H2O + H(+) = hydrogencarbonate + 2 NH4(+). It participates in nitrogen metabolism; urea degradation; CO(2) and NH(3) from urea (urease route): step 1/1. The polypeptide is Urease subunit beta (Citrobacter koseri (strain ATCC BAA-895 / CDC 4225-83 / SGSC4696)).